The following is a 201-amino-acid chain: 3-isopropylmalate dehydratase small subunit (201 aa).

It belongs to the LeuD family. LeuD type 1 subfamily. As to quaternary structure, heterodimer of LeuC and LeuD.

The enzyme catalyses (2R,3S)-3-isopropylmalate = (2S)-2-isopropylmalate. It functions in the pathway amino-acid biosynthesis; L-leucine biosynthesis; L-leucine from 3-methyl-2-oxobutanoate: step 2/4. Catalyzes the isomerization between 2-isopropylmalate and 3-isopropylmalate, via the formation of 2-isopropylmaleate. The protein is 3-isopropylmalate dehydratase small subunit of Paracoccus denitrificans (strain Pd 1222).